Consider the following 60-residue polypeptide: Toxin 4.9.6 (60 aa).

Disulfide bonds link Cys-3/Cys-22, Cys-17/Cys-38, Cys-40/Cys-52, and Cys-53/Cys-58.

This sequence belongs to the three-finger toxin family. Short-chain subfamily. Orphan group XI sub-subfamily. Expressed by the venom gland.

It localises to the secreted. The polypeptide is Toxin 4.9.6 (Dendroaspis viridis (Western green mamba)).